A 145-amino-acid polypeptide reads, in one-letter code: MTLTNYVQEVSLADFGKPLHHKAYWNKRLKTTGGRFFPKDGHLDFNPRMLEEHGELIFRKIVRHELCHYHLYFEGRGYHHKDRDFKDLLAQVNGLRYVPTSSKSKTNHHYSCQTCGQVYQRKRRINLAKYVCGNCHGKLMEKNQS.

The SprT-like domain occupies 4–140; that stretch reads TNYVQEVSLA…VCGNCHGKLM (137 aa). Histidine 64 contacts Zn(2+). Glutamate 65 is an active-site residue. Residue histidine 68 participates in Zn(2+) binding.

This sequence belongs to the SprT family. The cofactor is Zn(2+).

It localises to the cytoplasm. The polypeptide is Protein SprT-like (Streptococcus pyogenes serotype M1).